We begin with the raw amino-acid sequence, 107 residues long: ATP-dependent Clp protease adapter protein ClpS (107 aa).

The tract at residues 1–20 (MAQKHEHDTSVITESAPKQK) is disordered.

It belongs to the ClpS family. In terms of assembly, binds to the N-terminal domain of the chaperone ClpA.

In terms of biological role, involved in the modulation of the specificity of the ClpAP-mediated ATP-dependent protein degradation. This Myxococcus xanthus (strain DK1622) protein is ATP-dependent Clp protease adapter protein ClpS.